The sequence spans 275 residues: Dermonecrotic toxin LamSicTox-alphaIV1ii (275 aa).

Histidine 5 is an active-site residue. Residues glutamate 25 and aspartate 27 each contribute to the Mg(2+) site. The active-site Nucleophile is the histidine 41. Cystine bridges form between cysteine 45/cysteine 51 and cysteine 47/cysteine 192. Aspartate 85 provides a ligand contact to Mg(2+).

It belongs to the arthropod phospholipase D family. Class II subfamily. Mg(2+) is required as a cofactor. As to expression, expressed by the venom gland.

Its subcellular location is the secreted. It catalyses the reaction an N-(acyl)-sphingosylphosphocholine = an N-(acyl)-sphingosyl-1,3-cyclic phosphate + choline. The enzyme catalyses an N-(acyl)-sphingosylphosphoethanolamine = an N-(acyl)-sphingosyl-1,3-cyclic phosphate + ethanolamine. The catalysed reaction is a 1-acyl-sn-glycero-3-phosphocholine = a 1-acyl-sn-glycero-2,3-cyclic phosphate + choline. It carries out the reaction a 1-acyl-sn-glycero-3-phosphoethanolamine = a 1-acyl-sn-glycero-2,3-cyclic phosphate + ethanolamine. Dermonecrotic toxins cleave the phosphodiester linkage between the phosphate and headgroup of certain phospholipids (sphingolipid and lysolipid substrates), forming an alcohol (often choline) and a cyclic phosphate. This toxin acts on sphingomyelin (SM). It may also act on ceramide phosphoethanolamine (CPE), lysophosphatidylcholine (LPC) and lysophosphatidylethanolamine (LPE), but not on lysophosphatidylserine (LPS), and lysophosphatidylglycerol (LPG). It acts by transphosphatidylation, releasing exclusively cyclic phosphate products as second products. Induces dermonecrosis, hemolysis, increased vascular permeability, edema, inflammatory response, and platelet aggregation. In Loxosceles amazonica (Recluse spider), this protein is Dermonecrotic toxin LamSicTox-alphaIV1ii.